Here is a 1846-residue protein sequence, read N- to C-terminus: Brefeldin A-inhibited guanine nucleotide-exchange protein 1 (1846 aa).

The segment at 2–224 (YEGKKTKNMF…QEAKQMERER (223 aa)) is DCB; DCB:DCB domain and DCB:HUS domain interaction. The residue at position 52 (S52) is a Phosphoserine. 3 disordered regions span residues 216–249 (EAKQMERERHRQQQHLLQSPVSHHEPESPHLRYL), 264–304 (DLEP…ATAA), and 347–410 (ISAS…SPGA). Positions 264 to 277 (DLEPQTHDVDKSLQ) are enriched in basic and acidic residues. Phosphoserine occurs at positions 286, 289, and 290. Polar residues-rich tracts occupy residues 348–357 (SASTEGNTGT) and 391–406 (SVSSNDTQESGNSSGP). Phosphoserine is present on residues S394 and S407. Positions 554-574 (ADAQSVVDIYVNYDCDLNAAN) are HUS; DCB:HUS domain interaction. A disordered region spans residues 631–684 (PNSQTTLGQEKPSEQEISEVKHPETINRYGSLNSLESTSSSGIGSYSTQMSGTD). The segment covering 641-655 (KPSEQEISEVKHPET) has biased composition (basic and acidic residues). Positions 661–681 (SLNSLESTSSSGIGSYSTQMS) are enriched in low complexity. The SEC7 domain maps to 688 to 877 (QFEVLKQQKE…SAIYNEIAGK (190 aa)). A Nuclear localization signal (NLS) motif is present at residues 708-712 (KKPKR). Phosphoserine is present on residues S1076, S1563, and S1566.

As to quaternary structure, homodimer. Interacts with ARFGEF2/BIG2; both proteins are probably part of the same or very similar macromolecular complexes. Interacts with FKBP2. Interacts with MYO9B. Interacts with PRKAR1A and PRKAR2A. Interacts with PPP1CC. Interacts with NCL, FBL, NUP62 and U3 small nucleolar RNA. Interacts with DPY30. Interacts with PDE3A. Interacts with KANK1. Interacts with TBC1D22A and TBC1D22B. In terms of processing, phosphorylated. In vitro phosphorylated by PKA reducing its GEF activity and dephosphorylated by phosphatase PP1.

The protein localises to the cytoplasm. It localises to the perinuclear region. It is found in the golgi apparatus. The protein resides in the trans-Golgi network. Its subcellular location is the nucleus. The protein localises to the nucleolus. It localises to the nucleus matrix. It is found in the membrane. Its activity is regulated as follows. Inhibited by brefeldin A. Promotes guanine-nucleotide exchange on ARF1 and ARF3. Promotes the activation of ARF1/ARF3 through replacement of GDP with GTP. Involved in vesicular trafficking. Required for the maintenance of Golgi structure; the function may be independent of its GEF activity. Required for the maturation of integrin beta-1 in the Golgi. Involved in the establishment and persistence of cell polarity during directed cell movement in wound healing. Proposed to act as A kinase-anchoring protein (AKAP) and may mediate crosstalk between Arf and PKA pathways. Inhibits GAP activity of MYO9B probably through competitive RhoA binding. The function in the nucleus remains to be determined. This Mus musculus (Mouse) protein is Brefeldin A-inhibited guanine nucleotide-exchange protein 1 (Arfgef1).